A 430-amino-acid polypeptide reads, in one-letter code: Serine--tRNA ligase (430 aa).

231 to 233 (TSE) serves as a coordination point for L-serine. 262 to 264 (RSE) contacts ATP. Position 285 (glutamate 285) interacts with L-serine. Position 349 to 352 (349 to 352 (EISS)) interacts with ATP. Serine 385 is an L-serine binding site.

It belongs to the class-II aminoacyl-tRNA synthetase family. Type-1 seryl-tRNA synthetase subfamily. Homodimer. The tRNA molecule binds across the dimer.

Its subcellular location is the cytoplasm. The catalysed reaction is tRNA(Ser) + L-serine + ATP = L-seryl-tRNA(Ser) + AMP + diphosphate + H(+). It carries out the reaction tRNA(Sec) + L-serine + ATP = L-seryl-tRNA(Sec) + AMP + diphosphate + H(+). The protein operates within aminoacyl-tRNA biosynthesis; selenocysteinyl-tRNA(Sec) biosynthesis; L-seryl-tRNA(Sec) from L-serine and tRNA(Sec): step 1/1. In terms of biological role, catalyzes the attachment of serine to tRNA(Ser). Is also able to aminoacylate tRNA(Sec) with serine, to form the misacylated tRNA L-seryl-tRNA(Sec), which will be further converted into selenocysteinyl-tRNA(Sec). This Jannaschia sp. (strain CCS1) protein is Serine--tRNA ligase.